The chain runs to 222 residues: N-(5'-phosphoribosyl)anthranilate isomerase (222 aa).

This sequence belongs to the TrpF family.

The enzyme catalyses N-(5-phospho-beta-D-ribosyl)anthranilate = 1-(2-carboxyphenylamino)-1-deoxy-D-ribulose 5-phosphate. Its pathway is amino-acid biosynthesis; L-tryptophan biosynthesis; L-tryptophan from chorismate: step 3/5. The protein is N-(5'-phosphoribosyl)anthranilate isomerase of Symbiobacterium thermophilum (strain DSM 24528 / JCM 14929 / IAM 14863 / T).